The following is a 49-amino-acid chain: U-theraphotoxin-Lk2a (49 aa).

4 disulfide bridges follow: Cys-4-Cys-17, Cys-8-Cys-41, Cys-22-Cys-24, and Cys-35-Cys-46.

This sequence belongs to the neurotoxin 12 (Hwtx-2) family. 04 (lasiotoxin) subfamily. In terms of tissue distribution, expressed by the venom gland.

The protein localises to the secreted. In terms of biological role, toxin that causes irreversible contractile paralysis into adult Aedes aegypti resulting in 100% mortality after 24 hours. The protein is U-theraphotoxin-Lk2a of Lasiodora klugi (Bahia scarlet tarantula).